The chain runs to 152 residues: Deoxyuridine 5'-triphosphate nucleotidohydrolase (152 aa).

Substrate contacts are provided by residues 71-73, Asn-84, 88-90, and Met-98; these read RSG and LID.

It belongs to the dUTPase family. Mg(2+) serves as cofactor.

The catalysed reaction is dUTP + H2O = dUMP + diphosphate + H(+). It participates in pyrimidine metabolism; dUMP biosynthesis; dUMP from dCTP (dUTP route): step 2/2. In terms of biological role, this enzyme is involved in nucleotide metabolism: it produces dUMP, the immediate precursor of thymidine nucleotides and it decreases the intracellular concentration of dUTP so that uracil cannot be incorporated into DNA. This chain is Deoxyuridine 5'-triphosphate nucleotidohydrolase, found in Shewanella sp. (strain MR-7).